The primary structure comprises 356 residues: Phosphotriesterase-related protein (356 aa).

6 residues coordinate a divalent metal cation: His-23, His-25, Glu-175, His-207, His-236, and Asp-304.

The protein belongs to the metallo-dependent hydrolases superfamily. Phosphotriesterase family. Requires a divalent metal cation as cofactor.

The polypeptide is Phosphotriesterase-related protein (Aedes aegypti (Yellowfever mosquito)).